The chain runs to 413 residues: Putative F-box/kelch-repeat protein At3g22870 (413 aa).

The region spanning 2-53 is the F-box domain; sequence TLTISDLPRDLKKKIFSRIPLRYVRALRLTCKEWETLIKSRSLKIDEEESQM. 2 Kelch repeats span residues 156 to 202 and 331 to 379; these read LLRF…IGVS and KVFI…RRRQ.

The protein is Putative F-box/kelch-repeat protein At3g22870 of Arabidopsis thaliana (Mouse-ear cress).